Consider the following 181-residue polypeptide: Large ribosomal subunit protein uL6 (181 aa).

Belongs to the universal ribosomal protein uL6 family. Part of the 50S ribosomal subunit.

Its function is as follows. This protein binds to the 23S rRNA, and is important in its secondary structure. It is located near the subunit interface in the base of the L7/L12 stalk, and near the tRNA binding site of the peptidyltransferase center. The sequence is that of Large ribosomal subunit protein uL6 from Ruthia magnifica subsp. Calyptogena magnifica.